Consider the following 592-residue polypeptide: Ferric-chelate reductase 1 (592 aa).

The chain crosses the membrane as a helical span at residues 2-22; sequence AVSGFTLGTCILLLHISYVAN. The Reelin domain maps to 13–179; it reads LLLHISYVAN…FTTPKATVVP (167 aa). N-linked (GlcNAc...) asparagine glycosylation is found at Asn138, Asn308, and Asn321. One can recognise a DOMON domain in the interval 216–331; that stretch reads EASCVFLSFT…TSYYIFLADG (116 aa). Positions 335-534 constitute a Cytochrome b561 domain; sequence DGRIYKHSQQ…VGTEVVLEVH (200 aa). The chain crosses the membrane as a helical span at residues 372-392; the sequence is VHGALMFVAWMTTVSIGVLVA. Heme b contacts are provided by His373 and His414. 2 helical membrane passes run 415-435 and 446-466; these read RMLMFTTTVLTCIAFVMPFIY and HPYLGCIVMTLAVLQPLLAVF. Heme b contacts are provided by His446 and His482. Helical transmembrane passes span 491–511, 515–535, and 569–589; these read IIAVAAMFLGMDLPGLNLPDS, YAMTGFVAWHVGTEVVLEVHA, and AVLAIYVCGNVTFLIIFLSAI.

The protein belongs to the FRRS1 family. It depends on heme b as a cofactor.

The protein resides in the membrane. Ferric-chelate reductases reduce Fe(3+) to Fe(2+) before its transport from the endosome to the cytoplasm. The polypeptide is Ferric-chelate reductase 1 (FRRS1) (Homo sapiens (Human)).